A 281-amino-acid polypeptide reads, in one-letter code: CDAN1-interacting nuclease 1 (281 aa).

Residue threonine 114 is modified to Phosphothreonine.

It is found in the nucleus. The protein resides in the cytoplasm. Functionally, plays a role in erythroid cell differentiation. The polypeptide is CDAN1-interacting nuclease 1 (Mus musculus (Mouse)).